A 535-amino-acid chain; its full sequence is Ribonuclease Y 2 (535 aa).

The helical transmembrane segment at 1-21 (MLITGLIIGCLLIGLVIGYVV) threads the bilayer. In terms of domain architecture, KH spans 207 to 268 (LEHTVTVPNG…IRREVARVAL (62 aa)). The HD domain maps to 334–427 (VLLHSIEVAQ…VAAADAISGA (94 aa)).

It belongs to the RNase Y family.

It localises to the cell membrane. Its function is as follows. Endoribonuclease that initiates mRNA decay. The chain is Ribonuclease Y 2 from Levilactobacillus brevis (strain ATCC 367 / BCRC 12310 / CIP 105137 / JCM 1170 / LMG 11437 / NCIMB 947 / NCTC 947) (Lactobacillus brevis).